The following is an 88-amino-acid chain: Exodeoxyribonuclease 7 small subunit (88 aa).

Residues 69-88 are disordered; it reads DPMRPDDGEPFDPSIVSTSQ.

This sequence belongs to the XseB family. Heterooligomer composed of large and small subunits.

It localises to the cytoplasm. The enzyme catalyses Exonucleolytic cleavage in either 5'- to 3'- or 3'- to 5'-direction to yield nucleoside 5'-phosphates.. In terms of biological role, bidirectionally degrades single-stranded DNA into large acid-insoluble oligonucleotides, which are then degraded further into small acid-soluble oligonucleotides. This Xylella fastidiosa (strain M12) protein is Exodeoxyribonuclease 7 small subunit.